The sequence spans 123 residues: Maintenance of telomere capping protein 3, mitochondrial (123 aa).

Residues 1–37 (MMGRNGIRLALKRSFSTYQPPVVEITNITKLWPTLRP) constitute a mitochondrion transit peptide.

It is found in the mitochondrion. In terms of biological role, may be involved in telomere capping. This is Maintenance of telomere capping protein 3, mitochondrial (MTC3) from Saccharomyces cerevisiae (strain ATCC 204508 / S288c) (Baker's yeast).